The sequence spans 163 residues: Phospholipase A2 homolog 3 (163 aa).

Residues 1 to 43 form the signal peptide; the sequence is MARGGSFSRLRLRAGVVVAAAAAALLLFAVVAPPAAALNIGLQ. Disulfide bonds link cysteine 55–cysteine 83, cysteine 59–cysteine 89, cysteine 64–cysteine 137, cysteine 76–cysteine 96, cysteine 95–cysteine 121, and cysteine 102–cysteine 114. Residues tyrosine 75, glycine 77, and tyrosine 80 each contribute to the Ca(2+) site. The active site involves histidine 99. A Ca(2+)-binding site is contributed by aspartate 100.

Belongs to the phospholipase A2 family. Ca(2+) serves as cofactor.

Its subcellular location is the secreted. It catalyses the reaction a 1,2-diacyl-sn-glycero-3-phosphocholine + H2O = a 1-acyl-sn-glycero-3-phosphocholine + a fatty acid + H(+). With respect to regulation, inhibited by EGTA. Functionally, PA2 catalyzes the calcium-dependent hydrolysis of the 2-acyl groups in 3-sn-phosphoglycerides. Releases lysophospholipids (LPLs) and free fatty acids (FFAs) from membrane phospholipids in response to hormones and other external stimuli. The protein is Phospholipase A2 homolog 3 (PLA2-III) of Oryza sativa subsp. japonica (Rice).